A 266-amino-acid chain; its full sequence is Shikimate dehydrogenase (NADP(+)) (266 aa).

Shikimate is bound by residues serine 14–serine 16 and threonine 61. The Proton acceptor role is filled by lysine 65. Shikimate-binding residues include asparagine 85 and aspartate 100. NADP(+) is bound by residues glycine 124 to alanine 128 and alanine 210. Tyrosine 212 serves as a coordination point for shikimate. Glycine 233 provides a ligand contact to NADP(+).

Belongs to the shikimate dehydrogenase family. Homodimer.

It carries out the reaction shikimate + NADP(+) = 3-dehydroshikimate + NADPH + H(+). The protein operates within metabolic intermediate biosynthesis; chorismate biosynthesis; chorismate from D-erythrose 4-phosphate and phosphoenolpyruvate: step 4/7. Its function is as follows. Involved in the biosynthesis of the chorismate, which leads to the biosynthesis of aromatic amino acids. Catalyzes the reversible NADPH linked reduction of 3-dehydroshikimate (DHSA) to yield shikimate (SA). The polypeptide is Shikimate dehydrogenase (NADP(+)) (Halobacterium salinarum (strain ATCC 29341 / DSM 671 / R1)).